Consider the following 160-residue polypeptide: Cytochrome c-type biogenesis protein CcmE (160 aa).

At 1-8 (MNPRRKNR) the chain is on the cytoplasmic side. A helical; Signal-anchor for type II membrane protein transmembrane segment spans residues 9–29 (LILVMLVLVGLGLATALVMYA). The Periplasmic segment spans residues 30–160 (LRSNIDLFYT…AVGDNSVRPS (131 aa)). Heme contacts are provided by H130 and Y134. Over residues 133-148 (KYTPPEIEDAMKKDHP) the composition is skewed to basic and acidic residues. A disordered region spans residues 133–160 (KYTPPEIEDAMKKDHPAQAVGDNSVRPS).

Belongs to the CcmE/CycJ family.

The protein resides in the cell inner membrane. Its function is as follows. Heme chaperone required for the biogenesis of c-type cytochromes. Transiently binds heme delivered by CcmC and transfers the heme to apo-cytochromes in a process facilitated by CcmF and CcmH. In Erwinia tasmaniensis (strain DSM 17950 / CFBP 7177 / CIP 109463 / NCPPB 4357 / Et1/99), this protein is Cytochrome c-type biogenesis protein CcmE.